The chain runs to 380 residues: Sterol 24-C-methyltransferase ERG6B (380 aa).

It belongs to the class I-like SAM-binding methyltransferase superfamily. Erg6/SMT family.

It catalyses the reaction lanosterol + S-adenosyl-L-methionine = eburicol + S-adenosyl-L-homocysteine + H(+). Its pathway is steroid metabolism; ergosterol biosynthesis. Functionally, sterol 24-C-methyltransferase; part of the third module of ergosterol biosynthesis pathway that includes the late steps of the pathway. ERG6A and ERG6B methylate lanosterol at C-24 to produce eburicol. The third module or late pathway involves the ergosterol synthesis itself through consecutive reactions that mainly occur in the endoplasmic reticulum (ER) membrane. Firstly, the squalene synthase ERG9 catalyzes the condensation of 2 farnesyl pyrophosphate moieties to form squalene, which is the precursor of all steroids. Squalene synthase is crucial for balancing the incorporation of farnesyl diphosphate (FPP) into sterol and nonsterol isoprene synthesis. Secondly, squalene is converted into lanosterol by the consecutive action of the squalene epoxidase ERG1 and the lanosterol synthase ERG7. Then, the delta(24)-sterol C-methyltransferase ERG6 methylates lanosterol at C-24 to produce eburicol. Eburicol is the substrate of the sterol 14-alpha demethylase encoded by CYP51A, CYP51B and CYP51C, to yield 4,4,24-trimethyl ergosta-8,14,24(28)-trienol. CYP51B encodes the enzyme primarily responsible for sterol 14-alpha-demethylation, and plays an essential role in ascospore formation. CYP51A encodes an additional sterol 14-alpha-demethylase, induced on ergosterol depletion and responsible for the intrinsic variation in azole sensitivity. The third CYP51 isoform, CYP51C, does not encode a sterol 14-alpha-demethylase, but is required for full virulence on host wheat ears. The C-14 reductase ERG24 then reduces the C14=C15 double bond which leads to 4,4-dimethylfecosterol. A sequence of further demethylations at C-4, involving the C-4 demethylation complex containing the C-4 methylsterol oxidases ERG25, the sterol-4-alpha-carboxylate 3-dehydrogenase ERG26 and the 3-keto-steroid reductase ERG27, leads to the production of fecosterol via 4-methylfecosterol. ERG28 has a role as a scaffold to help anchor ERG25, ERG26 and ERG27 to the endoplasmic reticulum. The C-8 sterol isomerase ERG2 then catalyzes the reaction which results in unsaturation at C-7 in the B ring of sterols and thus converts fecosterol to episterol. The sterol-C5-desaturases ERG3A and ERG3BB then catalyze the introduction of a C-5 double bond in the B ring to produce 5-dehydroepisterol. The C-22 sterol desaturases ERG5A and ERG5B further convert 5-dehydroepisterol into ergosta-5,7,22,24(28)-tetraen-3beta-ol by forming the C-22(23) double bond in the sterol side chain. Finally, ergosta-5,7,22,24(28)-tetraen-3beta-ol is substrate of the C-24(28) sterol reductase ERG4 to produce ergosterol. The protein is Sterol 24-C-methyltransferase ERG6B of Gibberella zeae (strain ATCC MYA-4620 / CBS 123657 / FGSC 9075 / NRRL 31084 / PH-1) (Wheat head blight fungus).